The chain runs to 98 residues: Putative septation protein SpoVG (98 aa).

The protein belongs to the SpoVG family.

Essential for sporulation. Interferes with or is a negative regulator of the pathway leading to asymmetric septation. The protein is Putative septation protein SpoVG of Shouchella clausii (strain KSM-K16) (Alkalihalobacillus clausii).